A 224-amino-acid chain; its full sequence is Cytidylate kinase (224 aa).

Position 12 to 20 (12 to 20 (GPSGAGKGT)) interacts with ATP.

This sequence belongs to the cytidylate kinase family. Type 1 subfamily.

The protein localises to the cytoplasm. It catalyses the reaction CMP + ATP = CDP + ADP. The enzyme catalyses dCMP + ATP = dCDP + ADP. In Aliivibrio salmonicida (strain LFI1238) (Vibrio salmonicida (strain LFI1238)), this protein is Cytidylate kinase.